The chain runs to 158 residues: Endoribonuclease YbeY (158 aa).

Residues histidine 118, histidine 122, and histidine 128 each contribute to the Zn(2+) site.

Belongs to the endoribonuclease YbeY family. Zn(2+) serves as cofactor.

The protein localises to the cytoplasm. Single strand-specific metallo-endoribonuclease involved in late-stage 70S ribosome quality control and in maturation of the 3' terminus of the 16S rRNA. This Haemophilus ducreyi (strain 35000HP / ATCC 700724) protein is Endoribonuclease YbeY.